A 129-amino-acid chain; its full sequence is Protein BEX2 (129 aa).

Positions 1–37 (MESKVEQGVKNLNMENDHQEKEEKEEKPQDASKRDPI) are disordered. The segment covering 15–36 (ENDHQEKEEKEEKPQDASKRDP) has biased composition (basic and acidic residues). Arg-51 bears the Omega-N-methylarginine mark. The tract at residues 118–122 (HHDHH) is his cluster. Cys-126 lines the Zn(2+) pocket.

Belongs to the BEX family. In terms of assembly, interacts with LMO2, possibly leading to regulate the transcriptional activity of a DNA-binding complex containing LMO2. Interacts with OMP. In terms of tissue distribution, primarily localized to neuronal cells within several regions of the brain, including the olfactory epithelium, bulb, peri/paraventricular nuclei, suprachiasmatic nucleus, arcuate nucleus, median eminence, lateral hypothalamic area, thalamus, hippocampus and cerebellum (at protein level).

Its subcellular location is the cytoplasm. The protein resides in the nucleus. Regulator of mitochondrial apoptosis and G1 cell cycle. Regulates the level of PP2A regulatory subunit B and PP2A phosphatase activity. In absence of reductive stress, acts as a pseudosubstrate for the CRL2(FEM1B) complex: associates with FEM1B via zinc, thereby preventing association between FEM1B and its substrates. The protein is Protein BEX2 of Mus musculus (Mouse).